The primary structure comprises 334 residues: Cathepsin R (334 aa).

Positions 1 to 17 are cleaved as a signal peptide; the sequence is MAAVVFIAFLYLGVASG. Positions 18–114 are cleaved as a propeptide — activation peptide; it reads VPVLDSSLDA…SIMKREAGSI (97 aa). Disulfide bonds link cysteine 136/cysteine 179 and cysteine 170/cysteine 212. The active site involves cysteine 139. Asparagine 269 carries N-linked (GlcNAc...) asparagine glycosylation. Cysteine 270 and cysteine 323 are oxidised to a cystine. Catalysis depends on residues histidine 277 and asparagine 301.

Belongs to the peptidase C1 family. Placenta.

The protein resides in the lysosome. This Mus musculus (Mouse) protein is Cathepsin R (Ctsr).